The primary structure comprises 95 residues: MSYTIAAEIRTEIGKGSSRRLRHANKVPAVIYGAGKEPISIKFDHKDIINIQENADFYSSDLTITVDGKDVKVRVQAMQRHAFKGLIEHIDFKFA.

This sequence belongs to the bacterial ribosomal protein bL25 family. Part of the 50S ribosomal subunit; part of the 5S rRNA/L5/L18/L25 subcomplex. Contacts the 5S rRNA. Binds to the 5S rRNA independently of L5 and L18.

Functionally, this is one of the proteins that binds to the 5S RNA in the ribosome where it forms part of the central protuberance. This is Large ribosomal subunit protein bL25 from Shewanella sediminis (strain HAW-EB3).